Reading from the N-terminus, the 370-residue chain is Cytochrome b (370 aa).

4 consecutive transmembrane segments (helical) span residues 25 to 45 (FGSMLLACLTLQLLTGFFLAV), 69 to 90 (WMMQNLHAIGASMFFICIYIHI), 105 to 125 (WLSGTTLLIMLMATAFFGYVL), and 170 to 190 (FFALHFILPFGIISLSSLHIL). Positions 75 and 89 each coordinate heme b. Residues H174 and H188 each contribute to the heme b site. Position 193 (H193) interacts with a ubiquinone. 4 helical membrane passes run 218–238 (YKDMLMLTIMTIMLLTIVSFF), 280–300 (LGGALALTMSIMMLLTLPFTH), 312–332 (FMQLTFWTFTATFLVISWTAT), and 339–358 (FTTISQVAALMYFLFFISNP).

It belongs to the cytochrome b family. In terms of assembly, the cytochrome bc1 complex contains 3 respiratory subunits (MT-CYB, CYC1 and UQCRFS1), 2 core proteins (UQCRC1 and UQCRC2) and probably 6 low-molecular weight proteins. Requires heme b as cofactor.

It localises to the mitochondrion inner membrane. Component of the ubiquinol-cytochrome c reductase complex (complex III or cytochrome b-c1 complex) that is part of the mitochondrial respiratory chain. The b-c1 complex mediates electron transfer from ubiquinol to cytochrome c. Contributes to the generation of a proton gradient across the mitochondrial membrane that is then used for ATP synthesis. The protein is Cytochrome b (MT-CYB) of Chilabothrus strigilatus fosteri (Bimini Island boa constrictor).